The following is a 523-amino-acid chain: Pentatricopeptide repeat-containing protein At1g64580 (523 aa).

13 PPR repeats span residues 43-77, 78-112, 113-147, 148-182, 183-217, 218-252, 253-287, 288-322, 323-357, 358-392, 393-427, 428-462, and 463-497; these read HHHH…RPIP, SIVD…GISH, DLYS…GFRP, SIVT…GFVP, NVVI…GIRA, DAVT…KIDP, NVIF…SVVP, NVFT…GCFP, DVVT…GLVG, DAFT…GVSP, DIVT…EMDV, DIIT…GVKP, and DAIA…GFMP.

It belongs to the PPR family. P subfamily.

In Arabidopsis thaliana (Mouse-ear cress), this protein is Pentatricopeptide repeat-containing protein At1g64580.